Here is a 469-residue protein sequence, read N- to C-terminus: Citrate synthase, mitochondrial (469 aa).

The N-terminal 30 residues, 1–30, are a transit peptide targeting the mitochondrion; the sequence is MSFLSVSRLAPKLLNSKNATYFLVAARNAS. Residues His304 and His350 contribute to the active site. Arg359 is an oxaloacetate binding site. Asp405 is an active-site residue. Oxaloacetate is bound by residues Arg431 and Arg451.

The protein belongs to the citrate synthase family. As to quaternary structure, homodimer.

It is found in the mitochondrion matrix. It carries out the reaction oxaloacetate + acetyl-CoA + H2O = citrate + CoA + H(+). It participates in carbohydrate metabolism; tricarboxylic acid cycle; isocitrate from oxaloacetate: step 1/2. Functionally, key enzyme of the Krebs tricarboxylic acid cycle which catalyzes the synthesis of citrate from acetyl coenzyme A and oxaloacetate. In Katsuwonus pelamis (Skipjack tuna), this protein is Citrate synthase, mitochondrial (cs).